The following is a 440-amino-acid chain: Xylose isomerase (440 aa).

Residues H101 and D104 contribute to the active site. Mg(2+)-binding residues include E232, E268, H271, D296, D307, D309, and D339.

The protein belongs to the xylose isomerase family. Homotetramer. Requires Mg(2+) as cofactor.

It localises to the cytoplasm. It catalyses the reaction alpha-D-xylose = alpha-D-xylulofuranose. The chain is Xylose isomerase from Salmonella typhi.